A 148-amino-acid polypeptide reads, in one-letter code: 3-dehydroquinate dehydratase (148 aa).

3 residues coordinate substrate: asparagine 74, histidine 80, and aspartate 87. The active-site Proton donor is histidine 100. Substrate contacts are provided by residues 101 to 102 (LS) and arginine 111.

It belongs to the type-II 3-dehydroquinase family. Homododecamer.

The enzyme catalyses 3-dehydroquinate = 3-dehydroshikimate + H2O. Its pathway is metabolic intermediate biosynthesis; chorismate biosynthesis; chorismate from D-erythrose 4-phosphate and phosphoenolpyruvate: step 3/7. This chain is 3-dehydroquinate dehydratase (yqhS), found in Bacillus subtilis (strain 168).